The primary structure comprises 175 residues: Shikimate kinase (175 aa).

Position 17-22 (17-22 (GAGKST)) interacts with ATP. Position 21 (Ser21) interacts with Mg(2+). Asp39, Arg63, and Gly85 together coordinate substrate. Arg123 contributes to the ATP binding site. A substrate-binding site is contributed by Arg142. Gln159 is an ATP binding site.

Belongs to the shikimate kinase family. Monomer. It depends on Mg(2+) as a cofactor.

The protein localises to the cytoplasm. It carries out the reaction shikimate + ATP = 3-phosphoshikimate + ADP + H(+). The protein operates within metabolic intermediate biosynthesis; chorismate biosynthesis; chorismate from D-erythrose 4-phosphate and phosphoenolpyruvate: step 5/7. Functionally, catalyzes the specific phosphorylation of the 3-hydroxyl group of shikimic acid using ATP as a cosubstrate. This is Shikimate kinase from Photobacterium profundum (strain SS9).